Here is a 2293-residue protein sequence, read N- to C-terminus: Protein Ycf2 B (2293 aa).

1647–1654 is a binding site for ATP; it reads GSIGTGRS.

It belongs to the Ycf2 family.

The protein localises to the plastid. It is found in the chloroplast stroma. Probable ATPase of unknown function. Its presence in a non-photosynthetic plant (Epifagus virginiana) and experiments in tobacco indicate that it has an essential function which is probably not related to photosynthesis. In Crucihimalaya wallichii (Rock-cress), this protein is Protein Ycf2 B.